A 125-amino-acid polypeptide reads, in one-letter code: Small ribosomal subunit protein uS12 (125 aa).

D89 is subject to 3-methylthioaspartic acid.

The protein belongs to the universal ribosomal protein uS12 family. As to quaternary structure, part of the 30S ribosomal subunit. Contacts proteins S8 and S17. May interact with IF1 in the 30S initiation complex.

Functionally, with S4 and S5 plays an important role in translational accuracy. In terms of biological role, interacts with and stabilizes bases of the 16S rRNA that are involved in tRNA selection in the A site and with the mRNA backbone. Located at the interface of the 30S and 50S subunits, it traverses the body of the 30S subunit contacting proteins on the other side and probably holding the rRNA structure together. The combined cluster of proteins S8, S12 and S17 appears to hold together the shoulder and platform of the 30S subunit. The protein is Small ribosomal subunit protein uS12 of Bordetella avium (strain 197N).